The chain runs to 260 residues: tRNA pseudouridine synthase A (260 aa).

D52 functions as the Nucleophile in the catalytic mechanism. Y111 is a binding site for substrate.

The protein belongs to the tRNA pseudouridine synthase TruA family. Homodimer.

The enzyme catalyses uridine(38/39/40) in tRNA = pseudouridine(38/39/40) in tRNA. Formation of pseudouridine at positions 38, 39 and 40 in the anticodon stem and loop of transfer RNAs. This Roseobacter denitrificans (strain ATCC 33942 / OCh 114) (Erythrobacter sp. (strain OCh 114)) protein is tRNA pseudouridine synthase A.